Reading from the N-terminus, the 432-residue chain is uncharacterized protein (432 aa).

Positions 1–14 are enriched in polar residues; the sequence is MSDTTDVPENQKSP. A disordered region spans residues 1 to 42; sequence MSDTTDVPENQKSPKPSGKADKRKIEEKPENSSLKRKKFEDP. Positions 18 to 30 are enriched in basic and acidic residues; the sequence is GKADKRKIEEKPE. The S4 RNA-binding domain maps to 85–148; that stretch reads RKMVEVFSGE…HEHPIRDLPI (64 aa). Asp-199 is an active-site residue.

It belongs to the pseudouridine synthase RluA family.

This is an uncharacterized protein from Caenorhabditis elegans.